A 119-amino-acid polypeptide reads, in one-letter code: Large ribosomal subunit protein bL20 (119 aa).

This sequence belongs to the bacterial ribosomal protein bL20 family.

Binds directly to 23S ribosomal RNA and is necessary for the in vitro assembly process of the 50S ribosomal subunit. It is not involved in the protein synthesizing functions of that subunit. This Xylella fastidiosa (strain 9a5c) protein is Large ribosomal subunit protein bL20.